The following is an 82-amino-acid chain: Putative membrane protein insertion efficiency factor (82 aa).

This sequence belongs to the UPF0161 family.

It is found in the cell inner membrane. Its function is as follows. Could be involved in insertion of integral membrane proteins into the membrane. This is Putative membrane protein insertion efficiency factor from Colwellia psychrerythraea (strain 34H / ATCC BAA-681) (Vibrio psychroerythus).